The chain runs to 383 residues: Mannan endo-1,4-beta-mannosidase (383 aa).

Positions 1-35 (MRNARSTLITTAGMAFAVLGLLFALAGPSAGRAEA) are cleaved as a signal peptide. The region spanning 339 to 377 (GGSTGGTAPNGYPYCVNGGASDPDGDGWGWENSRSCVVR) is the CBM10 domain.

Belongs to the glycosyl hydrolase 5 (cellulase A) family. As to quaternary structure, monomer.

The enzyme catalyses Random hydrolysis of (1-&gt;4)-beta-D-mannosidic linkages in mannans, galactomannans and glucomannans.. This Streptomyces lividans protein is Mannan endo-1,4-beta-mannosidase (manA).